A 224-amino-acid chain; its full sequence is Putative cobalt transport protein CbiM (224 aa).

6 helical membrane-spanning segments follow: residues 8-28 (LPPL…VYGI), 41-61 (AMPM…LKMP), 75-95 (FGAV…VLVF), 108-128 (LGAN…AVWL), 138-158 (EIAM…VTAI), and 169-189 (FFTA…PLAI).

Belongs to the CbiM family. In terms of assembly, forms an energy-coupling factor (ECF) transporter complex composed of an ATP-binding protein (A component, CbiO), a transmembrane protein (T component, CbiQ) and 2 possible substrate-capture proteins (S components, CbiM and CbiN) of unknown stoichimetry.

Its subcellular location is the cell membrane. It functions in the pathway cofactor biosynthesis; adenosylcobalamin biosynthesis. Part of the energy-coupling factor (ECF) transporter complex CbiMNOQ involved in cobalt import. This Methanosphaera stadtmanae (strain ATCC 43021 / DSM 3091 / JCM 11832 / MCB-3) protein is Putative cobalt transport protein CbiM.